Consider the following 360-residue polypeptide: GTPase Obg (360 aa).

The Obg domain occupies 1–156 (MFVDSVEIII…KCVRLELKLI (156 aa)). Residues 157–360 (ADIGLVGFPN…LKFVLLEALP (204 aa)) form the OBG-type G domain. GTP-binding positions include 163–170 (GFPNAGKS), 188–192 (FTTLV), 210–213 (DIPG), 279–282 (NKCD), and 341–343 (SAV). The Mg(2+) site is built by Ser-170 and Thr-190.

The protein belongs to the TRAFAC class OBG-HflX-like GTPase superfamily. OBG GTPase family. Monomer. Mg(2+) is required as a cofactor.

Its subcellular location is the cytoplasm. Functionally, an essential GTPase which binds GTP, GDP and possibly (p)ppGpp with moderate affinity, with high nucleotide exchange rates and a fairly low GTP hydrolysis rate. Plays a role in control of the cell cycle, stress response, ribosome biogenesis and in those bacteria that undergo differentiation, in morphogenesis control. The polypeptide is GTPase Obg (Helicobacter pylori (strain ATCC 700392 / 26695) (Campylobacter pylori)).